The following is a 422-amino-acid chain: Adenylosuccinate synthetase (422 aa).

GTP contacts are provided by residues 11–17 (GDEGKGK) and 39–41 (GHT). Asp-12 serves as the catalytic Proton acceptor. 2 residues coordinate Mg(2+): Asp-12 and Gly-39. Residues 12–15 (DEGK), 37–40 (NAGH), Thr-129, Arg-143, Asn-219, Thr-234, and Arg-298 each bind IMP. The active-site Proton donor is His-40. 294-300 (VTTGRRR) is a binding site for substrate. Residues Arg-300, 326 to 328 (KLD), and 409 to 411 (GTG) each bind GTP.

It belongs to the adenylosuccinate synthetase family. In terms of assembly, homodimer. The cofactor is Mg(2+).

Its subcellular location is the cytoplasm. It carries out the reaction IMP + L-aspartate + GTP = N(6)-(1,2-dicarboxyethyl)-AMP + GDP + phosphate + 2 H(+). It functions in the pathway purine metabolism; AMP biosynthesis via de novo pathway; AMP from IMP: step 1/2. Functionally, plays an important role in the de novo pathway and in the salvage pathway of purine nucleotide biosynthesis. Catalyzes the first committed step in the biosynthesis of AMP from IMP. This chain is Adenylosuccinate synthetase, found in Ajellomyces capsulatus (strain H143) (Darling's disease fungus).